We begin with the raw amino-acid sequence, 1364 residues long: Outer kinetochore KNL1 complex subunit spc7 (1364 aa).

Residues 1-15 show a composition bias toward polar residues; that stretch reads MPTSPRRNSIATTDN. Disordered stretches follow at residues 1–36, 124–190, and 202–223; these read MPTS…GALQ, YPKD…DIAS, and EALN…LSIQ. A compositionally biased stretch (basic and acidic residues) spans 124–136; that stretch reads YPKDHQSDSEKST. Residues 157–169 are compositionally biased toward polar residues; it reads GPTTTSFSRNETQ. Positions 170 to 181 are enriched in low complexity; sequence SSPHSHSASIIS. The MELT; degenerate motif lies at 254-257; that stretch reads MDLT. At Thr-257 the chain carries Phosphothreonine; by mph1. The tract at residues 289–334 is disordered; sequence ASHDPSNQTQLSSPNKSSSPTSIEISDFSKNNENHDQSENKEEEED. The segment covering 300-310 has biased composition (low complexity); that stretch reads SSPNKSSSPTS. Residues 318-328 show a composition bias toward basic and acidic residues; sequence KNNENHDQSEN. Residues 450 to 453 carry the MELT; degenerate motif; the sequence is MDLT. A Phosphothreonine; by mph1 modification is found at Thr-453. The segment at 456-503 is disordered; it reads ISSTNAPTHLNEDDLNQFTSNISSSSKPRKDNNKTANSSKPIPDSEDF. The span at 471 to 481 shows a compositional bias: polar residues; it reads NQFTSNISSSS. An MELT; degenerate motif is present at residues 504 to 507; sequence MDIT. Thr-507 carries the phosphothreonine; by mph1 modification. Disordered regions lie at residues 564 to 643 and 697 to 837; these read LPSA…SSFD and GATP…GVSN. Basic and acidic residues predominate over residues 566 to 585; it reads SADKENAEREEIPSYSDKSE. A compositionally biased stretch (polar residues) spans 586–617; it reads NFNTTSFTNHERSPNGNNNLKFSKDPNSSSPS. Residues 719 to 730 are compositionally biased toward basic and acidic residues; the sequence is EVSRQPTDDKGE. A compositionally biased stretch (polar residues) spans 747-773; that stretch reads LTIQQTNEIKHVPTNTTSSVKLPQQPS. The segment covering 791 to 802 has biased composition (basic and acidic residues); sequence SLERLESQEPNR. Over residues 808–820 the composition is skewed to polar residues; sequence VGSSNAGNTTSVG. A coiled-coil region spans residues 1075-1155; it reads LAQAQEKLEK…EEQLLNLKNE (81 aa). The short motif at 1091-1105 is the Nuclear localization signal element; the sequence is RRRRLLSEKEERRKE.

In terms of assembly, component of the KNL1/SPC105 complex composed of at least spc7 and sos7. Part of the outer kinetochore KMN network that includes the KNL1, MIS12 and NDC80 complexes. Interacts (via C-terminus) with sos7 (via C-terminus); the interaction is direct. Interacts (when phosphorylated on MELT motifs) with bub1 and bub3; to recruit the BUB1-BUB3 complex to the kinetochore. Phosphorylation of threonine residues in the MELT motifs by mph1/mps1 leads to recruitment of bub1 and bub3 to the kinetochore, and is required to maintain spindle assembly checkpoint signaling.

It localises to the nucleus. It is found in the chromosome. Its subcellular location is the centromere. The protein resides in the kinetochore. In terms of biological role, acts as a component of the outer kinetochore KNL1 complex that serves as a docking point for spindle assembly checkpoint components and mediates microtubule-kinetochore interactions. Kinetochores, consisting of a centromere-associated inner segment and a microtubule-contacting outer segment, play a crucial role in chromosome segregation by mediating the physical connection between centromeric DNA and spindle microtubules. The outer kinetochore is made up of the ten-subunit KMN network, comprising the MIS12, NDC80 and KNL1 complexes, and auxiliary microtubule-associated components; together they connect the outer kinetochore with the inner kinetochore, bind microtubules, and mediate interactions with mitotic checkpoint proteins that delay anaphase until chromosomes are bioriented on the spindle. Recruits the BUB1-BUB3 complex to kinetochores when phosphorylated by mph1/mps1, to support spindle assembly checkpoint signaling. Functions both in mitotic and in meiotic chromosome segregation. The chain is Outer kinetochore KNL1 complex subunit spc7 from Schizosaccharomyces pombe (strain 972 / ATCC 24843) (Fission yeast).